The chain runs to 1004 residues: E3 ubiquitin-protein ligase NEDD4-like (1004 aa).

In terms of domain architecture, C2 spans 30–154 (LASHHSRGLE…TEDPTMERPY (125 aa)). 2 disordered regions span residues 207–230 (SNDS…WEEK) and 272–407 (AAHR…TPSV). The WW 1 domain occupies 221-254 (PPLPPGWEEKVDNLGRTYYVNHNNRSTQWHRPSL). Residue Ser341 is modified to Phosphoserine. Thr347 is subject to Phosphothreonine. 2 stretches are compositionally biased toward polar residues: residues 347–359 (TPDS…SSLI) and 366–376 (RLRSCSVTDTV). Ser371 carries the post-translational modification Phosphoserine; by WNK1 and WNK4. Thr396 is modified (phosphothreonine; by SGK1). Residues 414–447 (PGLPSGWEERKDAKGRTYYVNHNNRTTTWTRPIM) enclose the WW 2 domain. The interval 453 to 523 (GASGSATNSN…YNSPKPQHKV (71 aa)) is disordered. Position 475 is a phosphoserine (Ser475). Ser477 bears the Phosphoserine; by SGK1 mark. A phosphoserine mark is found at Ser478, Ser493, Ser504, Ser508, Ser512, and Ser516. Residues 489 to 500 (GAKDSPIRRAVK) show a composition bias toward basic and acidic residues. WW domains lie at 526 to 559 (SFLP…DPRL) and 577 to 610 (GPLP…DPRL). In terms of domain architecture, HECT spans 669–1003 (RPDVLKARLW…VENAQGFEGV (335 aa)). The active-site Glycyl thioester intermediate is Cys971.

As to quaternary structure, interacts with UBE2E3. Interacts with NDFIP1; this interaction activates the E3 ubiquitin-protein ligase. Interacts with NDFIP2; this interaction activates the E3 ubiquitin-protein ligase. Interacts (via WW domains) with SCN1A. Interacts (via WW domains) with SCN2A. Interacts (via WW domains) with SCN3A. Interacts (via WW domains) with SCN5A. Interacts (via WW domains) with SCN8A. Interacts (via WW domains) with SCN9A. Interacts (via WW domains) with SCN10A. Interacts (via WW domains) with CLCN5. Interacts with SMAD2. Interacts with SMAD3. Interacts with SMAD6. Interacts with SMAD7. The phosphorylated form interacts with 14-3-3 proteins. Interacts with TNK2. Interacts with WNK1. Interacts with SGK1. Interacts (via C2 domain) with NPC2. Interacts with ARRDC4. Interacts with KCNQ1; promotes internalization of KCNQ1. Interacts (via domains WW1, 3 and 4) with USP36; the interaction inhibits ubiquitination of, at least, NTRK1, KCNQ2 and KCNQ3 by NEDD4L. Interacts with PRRG4 (via cytoplasmic domain). Interacts with LDLRAD3; the interaction is direct. Interacts with UBE2D2. Interacts with TTYH2 and TTYH3. Phosphorylated; which impairs interaction with SCNN. Interaction with YWHAH inhibits dephosphorylation. Aldosterone induces Ser-477 phosphorylation by SGK1. Post-translationally, auto-ubiquitinated. Deubiquitinated by USP36, no effect on NEDD4L protein levels. Both proteins interact and regulate each other's ubiquitination levels. In terms of tissue distribution, highly expressed in liver and kidney. Also expressed in heart, brain and lung. Isoform 1 is expressed in kidney, lung and gut. Isoform 3 is ubiquitously expressed.

Its subcellular location is the cytoplasm. It is found in the golgi apparatus. The protein localises to the endosome. It localises to the multivesicular body. It catalyses the reaction S-ubiquitinyl-[E2 ubiquitin-conjugating enzyme]-L-cysteine + [acceptor protein]-L-lysine = [E2 ubiquitin-conjugating enzyme]-L-cysteine + N(6)-ubiquitinyl-[acceptor protein]-L-lysine.. It carries out the reaction [E2 ubiquitin-conjugating enzyme]-S-ubiquitinyl-L-cysteine + [acceptor protein]-L-cysteine = [E2 ubiquitin-conjugating enzyme]-L-cysteine + [acceptor protein]-S-ubiquitinyl-L-cysteine.. It participates in protein modification; protein ubiquitination. With respect to regulation, activated by NDFIP1- and NDFIP2-binding. Functionally, E3 ubiquitin-protein ligase that mediates the polyubiquitination of lysine and cysteine residues on target proteins and is thereby implicated in the regulation of various signaling pathways including autophagy, innate immunity or DNA repair. Inhibits TGF-beta signaling by triggering SMAD2 and TGFBR1 ubiquitination and proteasome-dependent degradation. Downregulates autophagy and cell growth by ubiquitinating and reducing cellular ULK1 or ASCT2 levels. Promotes ubiquitination and internalization of various plasma membrane channels such as ENaC, SCN2A/Nav1.2, SCN3A/Nav1.3, SCN5A/Nav1.5, SCN9A/Nav1.7, SCN10A/Nav1.8, KCNA3/Kv1.3, KCNH2, EAAT1, KCNQ2/Kv7.2, KCNQ3/Kv7.3 or CLC5. Promotes ubiquitination and degradation of SGK1 and TNK2. Ubiquitinates BRAT1 and this ubiquitination is enhanced in the presence of NDFIP1. Plays a role in dendrite formation by melanocytes. Involved in the regulation of TOR signaling. Ubiquitinates and regulates protein levels of NTRK1 once this one is activated by NGF. Plays a role in antiviral innate immunity by catalyzing 'Lys-29'-linked cysteine ubiquitination of TRAF3, resulting in enhanced 'Lys-48' and 'Lys-63'-linked ubiquitination of TRAF3. Ubiquitinates TTYH2 and TYYH3 and regulates protein levels of TTYH2. The polypeptide is E3 ubiquitin-protein ligase NEDD4-like (Nedd4l) (Mus musculus (Mouse)).